Here is a 122-residue protein sequence, read N- to C-terminus: Large ribosomal subunit protein uL14 (122 aa).

This sequence belongs to the universal ribosomal protein uL14 family. Part of the 50S ribosomal subunit. Forms a cluster with proteins L3 and L19. In the 70S ribosome, L14 and L19 interact and together make contacts with the 16S rRNA in bridges B5 and B8.

Functionally, binds to 23S rRNA. Forms part of two intersubunit bridges in the 70S ribosome. The polypeptide is Large ribosomal subunit protein uL14 (Limosilactobacillus fermentum (strain NBRC 3956 / LMG 18251) (Lactobacillus fermentum)).